The following is a 506-amino-acid chain: MEFFTEYGEASQYQIQEVVGKGSYGVVAAAVDTHTGERVAIKKINDVFEHVSDAIRILREIKVLRLLRHPDIVVIKHIMLPPTRREFRDIYVVFELMESDLHQVIEANHDLSPEHHRFFLYQLLCALKYIHSANVFHRDLKPKNILANSDCKLKICDFGLARVAFNDSPSTIFWTDYVATRWYRAPELCGSFFSKYTPAIDIWSIGCIFAEILTGRPLFPGRNVVHQLDLITDLLGTPSSETLSRIRNENARGYLTGMQRKHPIPFSHKFHNADPLALRLLERLLAFDPKDRPTAEEALADPYFRGISKLSREPSRLPVSKFEFEFERRKLTKDDVREMIYREILEYHPQMLQEYIRGGEQISFLYPSGVDRFKRQFAHLEENYSRGERSTPLRRQHASLPRERVCSSVDSNNQDSDNEERRAISSIARTMISPPRSQEKGKNRASAYPNGIINLNSNPKIYLKSASISASTCIIRGNKGPKENGISEDMEEVVYELSDNVTRMLS.

The Protein kinase domain occupies 13–304 (YQIQEVVGKG…AEEALADPYF (292 aa)). Residues 19-27 (VGKGSYGVV) and lysine 42 each bind ATP. Aspartate 139 acts as the Proton acceptor in catalysis. The residue at position 175 (threonine 175) is a Phosphothreonine. The TXY motif lies at 175–177 (TDY). Position 177 is a phosphotyrosine (tyrosine 177). The disordered stretch occupies residues 384–421 (YSRGERSTPLRRQHASLPRERVCSSVDSNNQDSDNEER).

It belongs to the protein kinase superfamily. CMGC Ser/Thr protein kinase family. MAP kinase subfamily. In terms of processing, dually phosphorylated on Thr-175 and Tyr-177, which activates the enzyme.

It carries out the reaction L-seryl-[protein] + ATP = O-phospho-L-seryl-[protein] + ADP + H(+). The catalysed reaction is L-threonyl-[protein] + ATP = O-phospho-L-threonyl-[protein] + ADP + H(+). Its activity is regulated as follows. Activated by threonine and tyrosine phosphorylation. The polypeptide is Mitogen-activated protein kinase 13 (MPK13) (Oryza sativa subsp. indica (Rice)).